Consider the following 362-residue polypeptide: Poly(rC)-binding protein 2 (362 aa).

KH domains lie at 13–75 and 97–162; these read TLTI…FAMI and PVTL…VKQI. A Glycyl lysine isopeptide (Lys-Gly) (interchain with G-Cter in SUMO2) cross-link involves residue K115. The residue at position 169 (S169) is a Phosphoserine. K181 is covalently cross-linked (Glycyl lysine isopeptide (Lys-Gly) (interchain with G-Cter in SUMO2)). Residues S185 and S268 each carry the phosphoserine modification. The KH 3 domain occupies 284–348; that stretch reads TTSHELTIPN…ASISLAQYLI (65 aa). A Glycyl lysine isopeptide (Lys-Gly) (interchain with G-Cter in SUMO2) cross-link involves residue K319. 2 positions are modified to phosphoserine: S361 and S362.

In terms of assembly, identified in a mRNP complex, at least composed of DHX9, DDX3X, ELAVL1, HNRNPU, IGF2BP1, ILF3, PABPC1, PCBP2, PTBP2, STAU1, STAU2, SYNCRIP and YBX1. Interacts with IFIH1 and RNF135. Interacts with MAVS (via C-terminus) and ITCH (via WW domains). Interacts with CGAS; preventing the formation of liquid-like droplets in which CGAS is activated. In terms of processing, phosphorylated. The non-phosphorylated form(s) exhibited the strongest poly(rC)-binding activity.

Its subcellular location is the nucleus. The protein resides in the cytoplasm. Functionally, single-stranded nucleic acid binding protein that binds preferentially to oligo dC. Major cellular poly(rC)-binding protein. Also binds poly(rU). Acts as a negative regulator of antiviral signaling. Negatively regulates cellular antiviral responses mediated by MAVS signaling. It acts as an adapter between MAVS and the E3 ubiquitin ligase ITCH, therefore triggering MAVS ubiquitination and degradation. Negativeley regulates the cGAS-STING pathway via interaction with CGAS, preventing the formation of liquid-like droplets in which CGAS is activated. Together with PCBP1, required for erythropoiesis, possibly by regulating mRNA splicing. In Mus musculus (Mouse), this protein is Poly(rC)-binding protein 2 (Pcbp2).